The following is a 482-amino-acid chain: tRNA sulfurtransferase (482 aa).

The 105-residue stretch at 61–165 (DVTLAVLTQT…NDKLNLIIAR (105 aa)) folds into the THUMP domain. Residues 183-184 (LI), Lys265, Gly287, and Gln296 contribute to the ATP site. Cys344 and Cys456 form a disulfide bridge. Residues 404-482 (LGSDVVVLDI…GYKNVKVYRP (79 aa)) enclose the Rhodanese domain. The Cysteine persulfide intermediate role is filled by Cys456.

The protein belongs to the ThiI family.

The protein resides in the cytoplasm. The enzyme catalyses [ThiI sulfur-carrier protein]-S-sulfanyl-L-cysteine + a uridine in tRNA + 2 reduced [2Fe-2S]-[ferredoxin] + ATP + H(+) = [ThiI sulfur-carrier protein]-L-cysteine + a 4-thiouridine in tRNA + 2 oxidized [2Fe-2S]-[ferredoxin] + AMP + diphosphate. The catalysed reaction is [ThiS sulfur-carrier protein]-C-terminal Gly-Gly-AMP + S-sulfanyl-L-cysteinyl-[cysteine desulfurase] + AH2 = [ThiS sulfur-carrier protein]-C-terminal-Gly-aminoethanethioate + L-cysteinyl-[cysteine desulfurase] + A + AMP + 2 H(+). It functions in the pathway cofactor biosynthesis; thiamine diphosphate biosynthesis. Its function is as follows. Catalyzes the ATP-dependent transfer of a sulfur to tRNA to produce 4-thiouridine in position 8 of tRNAs, which functions as a near-UV photosensor. Also catalyzes the transfer of sulfur to the sulfur carrier protein ThiS, forming ThiS-thiocarboxylate. This is a step in the synthesis of thiazole, in the thiamine biosynthesis pathway. The sulfur is donated as persulfide by IscS. In Aliivibrio fischeri (strain ATCC 700601 / ES114) (Vibrio fischeri), this protein is tRNA sulfurtransferase.